A 588-amino-acid chain; its full sequence is Calicin (588 aa).

The region spanning 28 to 98 is the BTB domain; the sequence is WDIALTVDHH…FYSGKVVISE (71 aa). Phosphoserine is present on Ser-149. 6 Kelch repeats span residues 280–327, 328–375, 377–423, 425–475, 476–525, and 526–580; these read SVVI…SAGR, YIYI…TCGG, VYSV…TRGD, NLYI…SFHQ, DNIL…VGDN, and KVFV…LAKL.

Interacts with CYLC1; the interaction may be relevant for proper acrosome attachment to the nuclear envelope. As to expression, expressed in testis and in spermatozoa (at protein level).

It is found in the cytoplasm. The protein resides in the cytoskeleton. It localises to the perinuclear theca. Its subcellular location is the calyx. In terms of biological role, required for both nuclear and acrosomal shaping during spermiogenesis. The sequence is that of Calicin (CCIN) from Bos taurus (Bovine).